The following is an 828-amino-acid chain: MKYLQFLAAVAAVSAFSGPVLAGSSVENTNQVLPVQLTGALFSQVANGQHAERAIKVDNSAQFVPVQGTIAALSAVLNEQKAGKRSFSVENTNQVLPIDVIIAGLSQVLTEQKAAKRDNIVKNTNQILPIEATIAALSAIANGQKAATKRSTAVDNSSQFIPIQGTLAAFSNVLNSQKATKRNTGKVVDNTNQVVPIQGTLAALSTVLNEQKASKRGVDVDNSSQTLPIEATIAALSTIANGQQAGKRNAPDFDVVKNSNQVLPIQATAALLSQIANGQSVEKRNAPDFDVVKNSNQVLPIQATAALLSQIANGQSVEKRNAPDFDVVKNSNQVLPIQATAALLSQIANGQSVEKRNAPDFDVVKNSNQVLPIQATAALLSQIANGQSVEKRNAPDFDSVKNSNQVVPIQATAALLSAVKNLQSVERNAPDFDSVKNSNQVVPIQATAALLSQIANGQSVEKRNAPDFDSVKNSNQVVPIQGTAALLSVVGNGQSVSKRHEGENNIVDNTNQVIPIQATIAALSTLLNSQKAERSYSVDNTNQVLPIEATLAAFSSVLNSQKAERSYSVENDNEVVPVDLVAAALSQVANGQKVTRRGETKESIKHNVNQVAPAQASLSALSDIVNSAHSRRAMDVKQYETLQYAINALQQALDKTNTGDKTHHVDAMTGTAEHFDERDAGLDPAAFLGSAASGISVPVGNKDLLKSLVKRYAAEEDEAMAKRTPSLNGRGQRPRPRNSSSSEHNNNGQCSVGEAKCCSQVITDEGKKKTLAGLLGFNNLVGDIGLNCQQIPVLGVSLQSICKATPVCCTNVSQDGLVNVGCTSIPIN.

Residues 1-22 (MKYLQFLAAVAAVSAFSGPVLA) form the signal peptide. N-linked (GlcNAc...) asparagine glycans are attached at residues Asn-156, Asn-222, and Asn-738. 4 disulfide bridges follow: Cys-750-Cys-808, Cys-757-Cys-802, Cys-758-Cys-788, and Cys-809-Cys-822. Asn-811 carries N-linked (GlcNAc...) asparagine glycosylation.

This sequence in the C-terminal section; belongs to the fungal hydrophobin family. As to quaternary structure, self-assembles to form functional amyloid fibrils called rodlets. Self-assembly into fibrillar rodlets occurs spontaneously at hydrophobic:hydrophilic interfaces and the rodlets further associate laterally to form amphipathic monolayers. Hum3 is an atypical hydrophobin that consists in a repetitive repellent-like region that spans 578 aa which is separated from a hydrophobin-like domain by a spacer region containing three possible kex2 processing sites. The repetitive region contains 17 amphipathic repeats of 31-36 aa each of them with a C-terminal putative kex2 processing motif.

It is found in the secreted. The protein resides in the cell wall. Its function is as follows. Aerial growth, conidiation, and dispersal of filamentous fungi in the environment rely upon a capability of their secreting small amphipathic proteins called hydrophobins (HPBs) with low sequence identity. Class I can self-assemble into an outermost layer of rodlet bundles on aerial cell surfaces, conferring cellular hydrophobicity that supports fungal growth, development and dispersal; whereas Class II form highly ordered films at water-air interfaces through intermolecular interactions but contribute nothing to the rodlet structure. Atypical class I hydrophobin that is preceded by a signal sequence and 17 imperfect repeats. The repeated peptides might function as repellents whereas the class I hydrophobin seems not to be crucial for the formation of aerial hyphae. Hydrophobins of Mycosarcoma maydis have been functionally replaced, at least partially, by repellents. Hum3 and rsp1 together are pathogenicity proteins that share an essential function in early stages of the infection. The polypeptide is Class I hydrophobin hum3 (Mycosarcoma maydis (Corn smut fungus)).